Consider the following 35-residue polypeptide: Sorbin and SH3 domain-containing protein 1 (35 aa).

The SoHo domain occupies 1–8; sequence LNRDDDSD. Phosphoserine is present on S15. One can recognise an SH3 domain in the interval 22-35; it reads CDDGWFVGTSRRTK.

In terms of assembly, interacts with the long isoform of AFDN and with VCL. AFDN and VCL bind to SORBS1 in a competitive manner and do not form a ternary complex. Interacts with ABL1, CBL, CBLB and INPPL1/SHIP2 through the third SH3 domain. Interaction with ABL1 occurs only after insulin stimulation while this has no effect on the interaction with INPPL1. Interacts with the insulin receptor but dissociates from it following insulin stimulation. Also interacts with SCA7, PTK2/FAK1 and flotillin. Interacts (via SH3 domain 2) with PXN. Interacts (via third SH3 domain) with the Ten-1 ICD form of TENM1; the interaction induces the translocation of SORBS1 to the nucleus. O-glycosylated.

The protein localises to the cell junction. The protein resides in the adherens junction. Its subcellular location is the cell membrane. It is found in the cytoplasm. It localises to the cytoskeleton. The protein localises to the focal adhesion. The protein resides in the nucleus. Its subcellular location is the nucleus matrix. Functionally, plays a role in tyrosine phosphorylation of CBL by linking CBL to the insulin receptor. Required for insulin-stimulated glucose transport. Involved in formation of actin stress fibers and focal adhesions. The chain is Sorbin and SH3 domain-containing protein 1 from Rattus norvegicus (Rat).